A 161-amino-acid chain; its full sequence is Bacterioferritin (161 aa).

Residues 1–145 (MKGDAKVIEF…TQISLYDRLG (145 aa)) form the Ferritin-like diiron domain. Fe cation-binding residues include Glu-18 and Glu-51. A heme b-binding site is contributed by Met-52. His-54, Glu-94, Glu-127, and His-130 together coordinate Fe cation.

This sequence belongs to the bacterioferritin family. Homooligomer of 24 subunits, arranged as 12 dimers, that are packed together to form an approximately spherical molecule with a central cavity, in which large amounts of iron can be deposited. The cofactor is heme b.

It carries out the reaction 4 Fe(2+) + O2 + 4 H(+) = 4 Fe(3+) + 2 H2O. The catalysed reaction is Fe(2+)(in) = Fe(2+)(out). In terms of biological role, iron-storage protein, whose ferroxidase center binds Fe(2+), oxidizes it using dioxygen to Fe(3+), and participates in the subsequent Fe(3+) oxide mineral core formation within the central cavity of the BFR protein shell. This is Bacterioferritin (bfr) from Rhodobacter capsulatus (Rhodopseudomonas capsulata).